The following is an 890-amino-acid chain: Translation initiation factor IF-2 (890 aa).

The segment at 45–303 (LIDHLNQKNS…SLQQGFQKPA (259 aa)) is disordered. The segment covering 67-81 (STLNIPGTGGKSKSV) has biased composition (polar residues). The span at 92 to 217 (VKRDPQEAER…RMAEENKWTD (126 aa)) shows a compositional bias: basic and acidic residues. Residues 252-266 (GRGRNAKAARPKKGN) are compositionally biased toward basic residues. Basic and acidic residues predominate over residues 267–280 (KHAESKADREEARA). The tr-type G domain maps to 389–558 (PRAPVVTIMG…LLQAEVLELK (170 aa)). The G1 stretch occupies residues 398–405 (GHVDHGKT). 398–405 (GHVDHGKT) lines the GTP pocket. Positions 423–427 (GITQH) are G2. The interval 444-447 (DTPG) is G3. GTP is bound by residues 444–448 (DTPGH) and 498–501 (NKID). Positions 498-501 (NKID) are G4. Residues 534–536 (SAK) are G5. Lys808 is modified (N6-acetyllysine).

Belongs to the TRAFAC class translation factor GTPase superfamily. Classic translation factor GTPase family. IF-2 subfamily.

Its subcellular location is the cytoplasm. One of the essential components for the initiation of protein synthesis. Protects formylmethionyl-tRNA from spontaneous hydrolysis and promotes its binding to the 30S ribosomal subunits. Also involved in the hydrolysis of GTP during the formation of the 70S ribosomal complex. This chain is Translation initiation factor IF-2, found in Shigella boydii serotype 18 (strain CDC 3083-94 / BS512).